Reading from the N-terminus, the 61-residue chain is Large ribosomal subunit protein bL32 (61 aa).

Over residues 1-16 the composition is skewed to basic residues; it reads MAVPKRKTSPSRRGMR. Residues 1–44 form a disordered region; that stretch reads MAVPKRKTSPSRRGMRRSADALKAPTYVEDKDSGELRRPHHIDL. Residues 28-44 are compositionally biased toward basic and acidic residues; that stretch reads VEDKDSGELRRPHHIDL.

This sequence belongs to the bacterial ribosomal protein bL32 family.

The polypeptide is Large ribosomal subunit protein bL32 (Methylobacterium nodulans (strain LMG 21967 / CNCM I-2342 / ORS 2060)).